The primary structure comprises 539 residues: Chaperone Ric-8A (539 aa).

It belongs to the synembryn family.

It is found in the cytoplasm. The protein resides in the cell cortex. Chaperone that specifically binds and folds nascent G alpha proteins prior to G protein heterotrimer formation, promoting their stability and activity: folds GNAI1, GNAO1, GNA13 and GNAQ. Does not fold G(s) G-alpha proteins GNAS nor GNAL. Also acts as a guanine nucleotide exchange factor (GEF) for G alpha proteins by stimulating exchange of bound GDP for free GTP. The protein is Chaperone Ric-8A (ric8a) of Xenopus tropicalis (Western clawed frog).